A 116-amino-acid polypeptide reads, in one-letter code: Large ribosomal subunit protein bL19 (116 aa).

It belongs to the bacterial ribosomal protein bL19 family.

In terms of biological role, this protein is located at the 30S-50S ribosomal subunit interface and may play a role in the structure and function of the aminoacyl-tRNA binding site. This chain is Large ribosomal subunit protein bL19 (rplS), found in Streptomyces lividans.